A 283-amino-acid polypeptide reads, in one-letter code: GDP-polyphosphate phosphotransferase (283 aa).

This sequence belongs to the polyphosphate kinase 2 (PPK2) family. Class I subfamily.

It carries out the reaction [phosphate](n) + GTP = [phosphate](n+1) + GDP. Functionally, uses inorganic polyphosphate (polyP) as a donor to convert GDP to GTP. The chain is GDP-polyphosphate phosphotransferase from Mycolicibacterium smegmatis (strain ATCC 700084 / mc(2)155) (Mycobacterium smegmatis).